The chain runs to 206 residues: 2-oxoglutarate-dependent dioxygenase iboH (206 aa).

One can recognise a Fe2OG dioxygenase domain in the interval 51–157 (PSTTTLVLLH…RYSIAYFLRP (107 aa)). Positions 75, 77, and 134 each coordinate Fe cation. 2-oxoglutarate is bound at residue Arg-148.

This sequence belongs to the iron/ascorbate-dependent oxidoreductase family. Fe(2+) serves as cofactor.

It carries out the reaction L-glutamate + 2-oxoglutarate + O2 = (3R)-3-hydroxy-L-glutamate + succinate + CO2. It participates in secondary metabolite biosynthesis. 2-oxoglutarate-dependent dioxygenase; part of the gene cluster that mediates the biosynthesis of the psychoactive metabolites ibotenic acid and muscimol. The first committed step is glutamate hydroxylation by the 2-oxoglutarate-dependent dioxygenase iboH, and the last step is decarboxylation of ibotenic acid to muscimol by the decarboxylase iboD. The order of the intermediate reactions is somewhat ambiguous. IboA likely activates the carboxylic acid at position 5 to introduce an amide bond, and the flavin monooxygenase iboF generates the N-O bond. There are several options for the latter step. One option is that iboF directly hydroxylates the amide nitrogen formed by iboA to produce a hydroxamic acid species. Another option is that iboF hydroxylates an external N-containing compound, whose resulting N-O bond is subsequently introduced into the hydroxyglutamate scaffold. The paralogous PLP-dependent cystathionine gamma-synthase-like enzymes iboG1 and iboG2 are likely involved in substitution of the OH group at position 3 by the O-N moiety. The first cyclic intermediate is most probably tricholomic acid which is likely desaturated to ibotenic acid by the cytochrome P450 monooxygenase iboC. The polypeptide is 2-oxoglutarate-dependent dioxygenase iboH (Amanita muscaria (strain Koide BX008)).